The primary structure comprises 68 residues: Large ribosomal subunit protein uL29 (68 aa).

It belongs to the universal ribosomal protein uL29 family.

This Bradyrhizobium diazoefficiens (strain JCM 10833 / BCRC 13528 / IAM 13628 / NBRC 14792 / USDA 110) protein is Large ribosomal subunit protein uL29.